Consider the following 228-residue polypeptide: 7-cyano-7-deazaguanine synthase (228 aa).

16–26 (FSGGQDSTTCL) provides a ligand contact to ATP. Zn(2+) contacts are provided by C193, C201, C204, and C207.

This sequence belongs to the QueC family. Zn(2+) is required as a cofactor.

It catalyses the reaction 7-carboxy-7-deazaguanine + NH4(+) + ATP = 7-cyano-7-deazaguanine + ADP + phosphate + H2O + H(+). The protein operates within purine metabolism; 7-cyano-7-deazaguanine biosynthesis. Functionally, catalyzes the ATP-dependent conversion of 7-carboxy-7-deazaguanine (CDG) to 7-cyano-7-deazaguanine (preQ(0)). The chain is 7-cyano-7-deazaguanine synthase from Pasteurella multocida (strain Pm70).